The following is a 219-amino-acid chain: tRNA (guanine-N(7)-)-methyltransferase (219 aa).

S-adenosyl-L-methionine is bound by residues Glu43, Asp68, Glu101, and Asn124. Lys128 and Asp160 together coordinate substrate.

This sequence belongs to the class I-like SAM-binding methyltransferase superfamily. TrmB family.

The enzyme catalyses guanosine(46) in tRNA + S-adenosyl-L-methionine = N(7)-methylguanosine(46) in tRNA + S-adenosyl-L-homocysteine. Its pathway is tRNA modification; N(7)-methylguanine-tRNA biosynthesis. Functionally, catalyzes the formation of N(7)-methylguanine at position 46 (m7G46) in tRNA. This chain is tRNA (guanine-N(7)-)-methyltransferase, found in Clostridium botulinum (strain Alaska E43 / Type E3).